Here is a 127-residue protein sequence, read N- to C-terminus: Large ribosomal subunit protein bL19 (127 aa).

Belongs to the bacterial ribosomal protein bL19 family.

This protein is located at the 30S-50S ribosomal subunit interface and may play a role in the structure and function of the aminoacyl-tRNA binding site. The chain is Large ribosomal subunit protein bL19 from Paraburkholderia phymatum (strain DSM 17167 / CIP 108236 / LMG 21445 / STM815) (Burkholderia phymatum).